The following is a 255-amino-acid chain: Small ribosomal subunit protein uS2 (255 aa).

Residues 231–255 (RLQTGAEEEFSTEGEEVVEETPAEA) form a disordered region. The segment covering 236–255 (AEEEFSTEGEEVVEETPAEA) has biased composition (acidic residues).

It belongs to the universal ribosomal protein uS2 family.

In Citrifermentans bemidjiense (strain ATCC BAA-1014 / DSM 16622 / JCM 12645 / Bem) (Geobacter bemidjiensis), this protein is Small ribosomal subunit protein uS2.